Consider the following 453-residue polypeptide: UDP-N-acetylmuramoylalanine--D-glutamate ligase (453 aa).

ATP is bound at residue 120 to 126 (GSNGKST).

It belongs to the MurCDEF family.

The protein resides in the cytoplasm. The enzyme catalyses UDP-N-acetyl-alpha-D-muramoyl-L-alanine + D-glutamate + ATP = UDP-N-acetyl-alpha-D-muramoyl-L-alanyl-D-glutamate + ADP + phosphate + H(+). Its pathway is cell wall biogenesis; peptidoglycan biosynthesis. Functionally, cell wall formation. Catalyzes the addition of glutamate to the nucleotide precursor UDP-N-acetylmuramoyl-L-alanine (UMA). The sequence is that of UDP-N-acetylmuramoylalanine--D-glutamate ligase from Nitrosococcus oceani (strain ATCC 19707 / BCRC 17464 / JCM 30415 / NCIMB 11848 / C-107).